The following is an 891-amino-acid chain: DNA mismatch repair protein MutS (891 aa).

634–641 (GPNMGGKS) contacts ATP.

The protein belongs to the DNA mismatch repair MutS family.

This protein is involved in the repair of mismatches in DNA. It is possible that it carries out the mismatch recognition step. This protein has a weak ATPase activity. The chain is DNA mismatch repair protein MutS from Burkholderia pseudomallei (strain 668).